The chain runs to 200 residues: Charged multivesicular body protein 6 (200 aa).

Residue G2 is the site of N-myristoyl glycine attachment. A coiled-coil region spans residues Q10–A145. Phosphoserine is present on S119. T130 is modified (phosphothreonine). The short motif at M168–P179 is the Type-2 MIT-interacting motif element. The disordered stretch occupies residues M168–S200.

The protein belongs to the SNF7 family. Probable core component of the endosomal sorting required for transport complex III (ESCRT-III). ESCRT-III components are thought to multimerize to form a flat lattice on the perimeter membrane of the endosome. Several assembly forms of ESCRT-III may exist that interact and act sequentially. Interacts with VPS4A; the interaction is direct. Interacts with VPS4B; the interaction is direct. Interacts with CHMP4A, CHMP4B and CHMP4C. Interacts with SNF8, VPS25 and VPS36. ISGylated in a CHMP5-dependent manner. Isgylation weakens its interaction with VPS4A.

It localises to the endomembrane system. The protein localises to the endosome membrane. Its subcellular location is the late endosome membrane. It is found in the membrane. Its function is as follows. Probable core component of the endosomal sorting required for transport complex III (ESCRT-III) which is involved in multivesicular bodies (MVBs) formation and sorting of endosomal cargo proteins into MVBs. MVBs contain intraluminal vesicles (ILVs) that are generated by invagination and scission from the limiting membrane of the endosome and mostly are delivered to lysosomes enabling degradation of membrane proteins, such as stimulated growth factor receptors, lysosomal enzymes and lipids. The MVB pathway appears to require the sequential function of ESCRT-O, -I,-II and -III complexes. ESCRT-III proteins mostly dissociate from the invaginating membrane before the ILV is released. The ESCRT machinery also functions in topologically equivalent membrane fission events, such as the terminal stages of cytokinesis. ESCRT-III proteins are believed to mediate the necessary vesicle extrusion and/or membrane fission activities, possibly in conjunction with the AAA ATPase VPS4. In the ESCRT-III complex, it probably serves as an acceptor for the ESCRT-II complex on endosomal membranes. The chain is Charged multivesicular body protein 6 (Chmp6) from Mus musculus (Mouse).